The chain runs to 436 residues: Chromosomal replication initiator protein DnaA (436 aa).

Positions 1–80 (MSHEAVWQHV…QAPRFELRVV (80 aa)) are domain I, interacts with DnaA modulators. A domain II region spans residues 80–100 (VPGVVVQEDIFQAAPAEAPRP). Residues 101-317 (KLNPKYTFEN…GALMRAIAFA (217 aa)) are domain III, AAA+ region. Gly145, Gly147, Lys148, and Thr149 together coordinate ATP. Residues 318–436 (SLNGVELTRA…LLRTLREACT (119 aa)) are domain IV, binds dsDNA.

It belongs to the DnaA family. In terms of assembly, oligomerizes as a right-handed, spiral filament on DNA at oriC.

It is found in the cytoplasm. The enzyme catalyses ATP + H2O = ADP + phosphate + H(+). In terms of biological role, plays an essential role in the initiation and regulation of chromosomal replication. ATP-DnaA binds to the origin of replication (oriC) to initiate formation of the DNA replication initiation complex once per cell cycle. Binds the DnaA box (a 9 base pair repeat at the origin) and separates the double-stranded (ds)DNA. Forms a right-handed helical filament on oriC DNA; dsDNA binds to the exterior of the filament while single-stranded (ss)DNA is stabiized in the filament's interior. The ATP-DnaA-oriC complex binds and stabilizes one strand of the AT-rich DNA unwinding element (DUE), permitting loading of DNA polymerase. After initiation quickly degrades to an ADP-DnaA complex that is not apt for DNA replication. Binds acidic phospholipids. The DnaA box consensus is 5'-TTATC[CA]A[CA]A-3' in this bacterium; oriC consists of 13 clustered DnaA boxes and a 40 base pair AT-rich region. ATP-DnaA binds cooperatively to multiple DnaA boxes, while ADP-DnaA binds with low cooperativity to the individual DnaA boxes. About 16-18 DnaA protein molecules bind their sites in oriC. Has a slow ATPase activity. Binds linear and supercoiled DNA. This is Chromosomal replication initiator protein DnaA from Thermus thermophilus (strain ATCC 27634 / DSM 579 / HB8).